We begin with the raw amino-acid sequence, 235 residues long: TVP38/TMEM64 family inner membrane protein YdjZ (235 aa).

At M1–R13 the chain is on the periplasmic side. A helical transmembrane segment spans residues I14–H34. The Cytoplasmic portion of the chain corresponds to E35 to A64. A helical transmembrane segment spans residues V65–I85. Residues T86–A95 are Periplasmic-facing. The VTT domain stretch occupies residues A90–L199. A helical transmembrane segment spans residues F96–I116. At A117–S176 the chain is on the cytoplasmic side. Residues F177–S197 traverse the membrane as a helical segment. The Periplasmic portion of the chain corresponds to M198–G202. Residues T203 to A223 traverse the membrane as a helical segment. The Cytoplasmic segment spans residues K224 to A235.

This sequence belongs to the TVP38/TMEM64 family.

It is found in the cell inner membrane. This is TVP38/TMEM64 family inner membrane protein YdjZ (ydjZ) from Escherichia coli (strain K12).